We begin with the raw amino-acid sequence, 395 residues long: Chalcone synthase 1 (395 aa).

V2 carries the N-acetylvaline modification. C169 is a catalytic residue.

It belongs to the thiolase-like superfamily. Chalcone/stilbene synthases family.

It carries out the reaction (E)-4-coumaroyl-CoA + 3 malonyl-CoA + 3 H(+) = 2',4,4',6'-tetrahydroxychalcone + 3 CO2 + 4 CoA. The protein operates within secondary metabolite biosynthesis; flavonoid biosynthesis. The primary product of this enzyme is 4,2',4',6'-tetrahydroxychalcone (also termed naringenin-chalcone or chalcone) which can under specific conditions spontaneously isomerize into naringenin. The polypeptide is Chalcone synthase 1 (CHS1) (Sinapis alba (White mustard)).